The sequence spans 191 residues: Large ribosomal subunit protein bL25 (191 aa).

Belongs to the bacterial ribosomal protein bL25 family. CTC subfamily. In terms of assembly, part of the 50S ribosomal subunit; part of the 5S rRNA/L5/L18/L25 subcomplex. Contacts the 5S rRNA. Binds to the 5S rRNA independently of L5 and L18.

Its function is as follows. This is one of the proteins that binds to the 5S RNA in the ribosome where it forms part of the central protuberance. The chain is Large ribosomal subunit protein bL25 from Nitratidesulfovibrio vulgaris (strain DSM 19637 / Miyazaki F) (Desulfovibrio vulgaris).